The following is an 87-amino-acid chain: uncharacterized protein (87 aa).

A signal peptide spans 1-25 (MKIRKILLSSALSFGMLISAVPALA).

This is an uncharacterized protein from Bacillus subtilis (strain 168).